We begin with the raw amino-acid sequence, 301 residues long: Peptidyl-prolyl isomerase CWC27 (301 aa).

The region spanning 9–159 is the PPIase cyclophilin-type domain; that stretch reads TTAKCILYTT…YPAVLKDVEI (151 aa). A disordered region spans residues 251-280; sequence TELHDNVDEATTKETESQENIKEEPMDKRE.

Belongs to the cyclophilin-type PPIase family. CWC27 subfamily. As to quaternary structure, belongs to the CWC complex (or CEF1-associated complex), a spliceosome subcomplex composed of the U2, U5 and U6 snRNAs and at least BUD13, BUD31, BRR2, CDC40, CEF1, CLF1, CUS1, CWC2, CWC15, CWC21, CWC22, CWC23, CWC24, CWC25, CWC27, ECM2, HSH155, IST3, ISY1, LEA1, MSL1, NTC20, PRP8, PRP9, PRP11, PRP19, PRP21, PRP22, PRP45, PRP46, SLU7, SMB1, SMD1, SMD2, SMD3, SMX2, SMX3, SNT309, SNU114, SPP2, SYF1, SYF2, RSE1 and YJU2.

The protein resides in the cytoplasm. It localises to the nucleus. It carries out the reaction [protein]-peptidylproline (omega=180) = [protein]-peptidylproline (omega=0). In terms of biological role, PPIases accelerate the folding of proteins. Catalyzes the cis-trans isomerization of proline imidic peptide bonds in oligopeptides. Involved in pre-mRNA splicing. The polypeptide is Peptidyl-prolyl isomerase CWC27 (CWC27) (Saccharomyces cerevisiae (strain ATCC 204508 / S288c) (Baker's yeast)).